We begin with the raw amino-acid sequence, 173 residues long: Ribosome maturation factor RimM (173 aa).

Positions 97 to 171 constitute a PRC barrel domain; that stretch reads EGEFFYHEII…QITIEPMEGL (75 aa).

The protein belongs to the RimM family. Binds ribosomal protein uS19.

Its subcellular location is the cytoplasm. Functionally, an accessory protein needed during the final step in the assembly of 30S ribosomal subunit, possibly for assembly of the head region. Essential for efficient processing of 16S rRNA. May be needed both before and after RbfA during the maturation of 16S rRNA. It has affinity for free ribosomal 30S subunits but not for 70S ribosomes. The sequence is that of Ribosome maturation factor RimM from Halalkalibacterium halodurans (strain ATCC BAA-125 / DSM 18197 / FERM 7344 / JCM 9153 / C-125) (Bacillus halodurans).